We begin with the raw amino-acid sequence, 790 residues long: Probable copper-transporting ATPase SynA (790 aa).

Topologically, residues 1–105 (MPAAIVHSAD…IPPLQQQRLQ (105 aa)) are cytoplasmic. The 68-residue stretch at 14–81 (TSILVEVEGM…EITGLGFRAQ (68 aa)) folds into the HMA domain. Positions 25 and 28 each coordinate Cu(+). Residues 106–127 (LAIAAFLLIVSSWGHLGHWLDH) form a helical membrane-spanning segment. Over 128–136 (PLPGTDQLW) the chain is Extracellular. The helical transmembrane segment at 137-156 (FHALLATWALLGPGRSILQA) threads the bilayer. The Cytoplasmic segment spans residues 157–163 (GWQGLRC). A helical membrane pass occupies residues 164 to 184 (GAPNMNSLVLLGTGSAYLASL). The Extracellular portion of the chain corresponds to 185-198 (VALLWPQLGWVCFF). Residues 199-219 (DEPVMLLGFILLGRTLEEQAR) form a helical membrane-spanning segment. Over 220–358 (FRSQAALQNL…KAPVQRFADA (139 aa)) the chain is Cytoplasmic. The chain crosses the membrane as a helical span at residues 359–381 (IAGRFVYGVCAIAALTFGFWATL). Topologically, residues 382 to 420 (GSRWWPQVLQQPLPGLLIHAPHHGMEMAHPHSHSPLLLA) are extracellular. The helical transmembrane segment at 421–438 (LTLAISVLVVACPCALGL) threads the bilayer. Topologically, residues 439–723 (ATPTAILVAT…NLSQMGLRTI (285 aa)) are cytoplasmic. The active-site 4-aspartylphosphate intermediate is D476. Mg(2+) is bound by residues D669 and D673. The chain crosses the membrane as a helical span at residues 724–743 (RQNLTWALGYNVVMLPLAAG). Residues 744–755 (AFLPAYGLALTP) lie on the Extracellular side of the membrane. A helical membrane pass occupies residues 756–774 (AIAGACMAVSSLAVVSNSL). Over 775 to 790 (LLRYWFRRSLNHSVSV) the chain is Cytoplasmic.

It belongs to the cation transport ATPase (P-type) (TC 3.A.3) family. Type IB subfamily.

The protein resides in the cell membrane. It catalyses the reaction Cu(+)(in) + ATP + H2O = Cu(+)(out) + ADP + phosphate + H(+). Its function is as follows. Involved in copper transport. The sequence is that of Probable copper-transporting ATPase SynA (synA) from Synechococcus elongatus (strain ATCC 33912 / PCC 7942 / FACHB-805) (Anacystis nidulans R2).